Consider the following 296-residue polypeptide: Acetylglutamate kinase (296 aa).

Residues 67–68 (GG), Arg-89, and Asn-194 each bind substrate.

It belongs to the acetylglutamate kinase family. ArgB subfamily.

The protein localises to the cytoplasm. It catalyses the reaction N-acetyl-L-glutamate + ATP = N-acetyl-L-glutamyl 5-phosphate + ADP. It participates in amino-acid biosynthesis; L-arginine biosynthesis; N(2)-acetyl-L-ornithine from L-glutamate: step 2/4. Catalyzes the ATP-dependent phosphorylation of N-acetyl-L-glutamate. This Brucella canis (strain ATCC 23365 / NCTC 10854 / RM-666) protein is Acetylglutamate kinase.